The primary structure comprises 560 residues: DNA ligase B (560 aa).

The active-site N6-AMP-lysine intermediate is K124.

This sequence belongs to the NAD-dependent DNA ligase family. LigB subfamily.

The enzyme catalyses NAD(+) + (deoxyribonucleotide)n-3'-hydroxyl + 5'-phospho-(deoxyribonucleotide)m = (deoxyribonucleotide)n+m + AMP + beta-nicotinamide D-nucleotide.. Catalyzes the formation of phosphodiester linkages between 5'-phosphoryl and 3'-hydroxyl groups in double-stranded DNA using NAD as a coenzyme and as the energy source for the reaction. The protein is DNA ligase B of Escherichia coli (strain SMS-3-5 / SECEC).